A 386-amino-acid chain; its full sequence is Branched-chain-amino-acid aminotransferase, cytosolic (386 aa).

Methionine 1 carries the N-acetylmethionine modification. Lysine 222 is subject to N6-(pyridoxal phosphate)lysine.

Belongs to the class-IV pyridoxal-phosphate-dependent aminotransferase family. In terms of assembly, homodimer. Pyridoxal 5'-phosphate is required as a cofactor. In terms of tissue distribution, expressed in brain and kidney. Overexpressed in MYC-induced brain tumors, lymphomas, as well as in a teratocarcinoma cell line.

The protein localises to the cytoplasm. It catalyses the reaction L-leucine + 2-oxoglutarate = 4-methyl-2-oxopentanoate + L-glutamate. It carries out the reaction L-isoleucine + 2-oxoglutarate = (S)-3-methyl-2-oxopentanoate + L-glutamate. The enzyme catalyses L-valine + 2-oxoglutarate = 3-methyl-2-oxobutanoate + L-glutamate. Functionally, catalyzes the first reaction in the catabolism of the essential branched chain amino acids leucine, isoleucine, and valine. The polypeptide is Branched-chain-amino-acid aminotransferase, cytosolic (Bcat1) (Mus musculus (Mouse)).